The primary structure comprises 395 residues: Flavohemoprotein (395 aa).

One can recognise a Globin domain in the interval Met-1–Ser-136. His-85 contributes to the heme b binding site. Residues Tyr-95 and Glu-135 each act as charge relay system in the active site. The reductase stretch occupies residues Gly-147–Ile-395. The FAD-binding FR-type domain occupies His-150–Glu-255. Residues Tyr-188 and Arg-204 to Ser-207 contribute to the FAD site. An NADP(+)-binding site is contributed by Gly-268 to Pro-273. Cys-388–Pro-391 provides a ligand contact to FAD.

The protein belongs to the globin family. Two-domain flavohemoproteins subfamily. In the C-terminal section; belongs to the flavoprotein pyridine nucleotide cytochrome reductase family. It depends on heme b as a cofactor. FAD is required as a cofactor.

The protein resides in the cytoplasm. The catalysed reaction is 2 nitric oxide + NADPH + 2 O2 = 2 nitrate + NADP(+) + H(+). It catalyses the reaction 2 nitric oxide + NADH + 2 O2 = 2 nitrate + NAD(+) + H(+). Functionally, is involved in NO detoxification in an aerobic process, termed nitric oxide dioxygenase (NOD) reaction that utilizes O(2) and NAD(P)H to convert NO to nitrate, which protects the bacterium from various noxious nitrogen compounds. Therefore, plays a central role in the inducible response to nitrosative stress. In Dickeya dadantii (strain 3937) (Erwinia chrysanthemi (strain 3937)), this protein is Flavohemoprotein (hmp).